We begin with the raw amino-acid sequence, 144 residues long: Large ribosomal subunit protein uL16 (144 aa).

Belongs to the universal ribosomal protein uL16 family. Part of the 50S ribosomal subunit.

In terms of biological role, binds 23S rRNA and is also seen to make contacts with the A and possibly P site tRNAs. The sequence is that of Large ribosomal subunit protein uL16 from Clostridium perfringens (strain ATCC 13124 / DSM 756 / JCM 1290 / NCIMB 6125 / NCTC 8237 / Type A).